The chain runs to 196 residues: Pyridoxal 5'-phosphate synthase subunit PdxT (196 aa).

47 to 49 (GES) is an L-glutamine binding site. The active-site Nucleophile is cysteine 79. L-glutamine contacts are provided by residues arginine 106 and 134–135 (IR). Catalysis depends on charge relay system residues histidine 170 and glutamate 172.

Belongs to the glutaminase PdxT/SNO family. As to quaternary structure, in the presence of PdxS, forms a dodecamer of heterodimers. Only shows activity in the heterodimer.

It catalyses the reaction aldehydo-D-ribose 5-phosphate + D-glyceraldehyde 3-phosphate + L-glutamine = pyridoxal 5'-phosphate + L-glutamate + phosphate + 3 H2O + H(+). It carries out the reaction L-glutamine + H2O = L-glutamate + NH4(+). It participates in cofactor biosynthesis; pyridoxal 5'-phosphate biosynthesis. Its function is as follows. Catalyzes the hydrolysis of glutamine to glutamate and ammonia as part of the biosynthesis of pyridoxal 5'-phosphate. The resulting ammonia molecule is channeled to the active site of PdxS. The polypeptide is Pyridoxal 5'-phosphate synthase subunit PdxT (Bacillus anthracis (strain A0248)).